We begin with the raw amino-acid sequence, 295 residues long: NAD kinase (295 aa).

Asp73 (proton acceptor) is an active-site residue. Residues 73–74, Arg78, 146–147, Lys157, Arg174, Asp176, and 187–192 each bind NAD(+); these read DG, NE, and TAYSLS.

It belongs to the NAD kinase family. Requires a divalent metal cation as cofactor.

Its subcellular location is the cytoplasm. The catalysed reaction is NAD(+) + ATP = ADP + NADP(+) + H(+). Its function is as follows. Involved in the regulation of the intracellular balance of NAD and NADP, and is a key enzyme in the biosynthesis of NADP. Catalyzes specifically the phosphorylation on 2'-hydroxyl of the adenosine moiety of NAD to yield NADP. This chain is NAD kinase, found in Wigglesworthia glossinidia brevipalpis.